A 675-amino-acid polypeptide reads, in one-letter code: Acyl-coenzyme A oxidase 3, peroxisomal (675 aa).

Residues 1–34 (MSDNRALRRAHVLANHILQSNPPSSNPSLSRELC) constitute a peroxisome transit peptide. 442-457 (AVGGQGVKTENLVGQL) lines the FAD pocket.

This sequence belongs to the acyl-CoA oxidase family. The cofactor is FAD. Most abundant in flowers and senescing rosette leaves. Lower expression in hypocotyls, stems, young rosette leaves, cotyledons, cauline leaves and root tip of young seedlings.

The protein resides in the peroxisome. The enzyme catalyses a 2,3-saturated acyl-CoA + O2 = a (2E)-enoyl-CoA + H2O2. It participates in lipid metabolism; peroxisomal fatty acid beta-oxidation. Catalyzes the desaturation of medium-chain acyl-CoAs to 2-trans-enoyl-CoAs. Active on C8:0- to C14:0-CoA with a maximal activity on C12:0-CoA. The polypeptide is Acyl-coenzyme A oxidase 3, peroxisomal (ACX3) (Arabidopsis thaliana (Mouse-ear cress)).